A 332-amino-acid polypeptide reads, in one-letter code: MASGLTRLLLRGPRCLLATAGLTLIPPVRGVKKGFRAAFRFQKELERWRLLRCPPPPVRRSEKPNWDYHAEIQAFGPRLQETFSLDLLKTAFVNSCYIKSEEAKRQKLGIEKEAVLLNLKDNQELSEQGTSFSQTCLTQFFEDAFPDLPTEGVKSLVDYLTGEEVVCHVARNLAVEQLTLSADFPVPPAVLRQTFFAVIGALLHSSGPERTSLFIRDFLITQMTGKELFEIWKIINPMGLLVQELKKRNISVPESRLTRQSGSTTALPVYFVGLYCDKKLIAEGPGETVLVAEEEAARVALRKLYGFTENRQPWDYSRPKEPVRAEKTIAAS.

The N-terminal 30 residues, 1–30, are a transit peptide targeting the mitochondrion; the sequence is MASGLTRLLLRGPRCLLATAGLTLIPPVRG. The 143-residue stretch at 86 to 228 folds into the RNase III domain; that stretch reads DLLKTAFVNS…LITQMTGKEL (143 aa). The DRBM domain maps to 236 to 306; sequence NPMGLLVQEL…ARVALRKLYG (71 aa).

It belongs to the ribonuclease III family. Mitochondrion-specific ribosomal protein mL44 subfamily. Component of the mitochondrial ribosome large subunit (39S) which comprises a 16S rRNA and about 50 distinct proteins.

It is found in the mitochondrion. In terms of biological role, component of the 39S subunit of mitochondrial ribosome. May have a function in the assembly/stability of nascent mitochondrial polypeptides exiting the ribosome. In Bos taurus (Bovine), this protein is Large ribosomal subunit protein mL44 (MRPL44).